The sequence spans 212 residues: MTKESSVLNHKASGTALVICAPSGTGKTTLIQRLRKEFPCFAYSISCTTRPPRKNEEDGKDYYFISQEEFIARKNEKYFAEWAYVHGYFYGTPLAPILTILNNGQDILFDIDVQGAAQLYLTLPYAKYIFLLPPTMVELEKRLRSRGTDREDIIQHRLLSATQEIRQAHWFDTWIVNENIDKAYDELRATYLASKLSPKFQPTLITSILEGW.

Residues 14–192 (GTALVICAPS…AYDELRATYL (179 aa)) form the Guanylate kinase-like domain. Residue 21–28 (APSGTGKT) participates in ATP binding.

Belongs to the guanylate kinase family.

The protein resides in the cytoplasm. It catalyses the reaction GMP + ATP = GDP + ADP. Essential for recycling GMP and indirectly, cGMP. This is Guanylate kinase from Lawsonia intracellularis (strain PHE/MN1-00).